A 429-amino-acid polypeptide reads, in one-letter code: MTQLEYARKGEITPEMEYVAKTENIDVEKLRKNIASGKVVIPKNVHNNTLPTGIGKDLHTKINANIGSSTEMEDINVELEKLDILLKYGADAVMDLSTGPKLHEIRKAIRDKTNIPLGTVPIYEAGVETTSQDKIIVDMDDDIIFKTIINQAKEGVDFITVHCGITQDAIKAVDDSERLMGIVSRGGALTAAWIMHNERENPLYAEYDYLLEICKEHDVTLSLGDGLRPGCIHDATDIAQIRELTTLGRLVKRSQKAGVQVMVEGPGHVPITQVKANMQIQKTICSDAPFYVLGPLVTDVAPGYDHITAAIGASIAGASGADFLCYVTPAEHLCIPNKEHVKQGVIASKIAAEVSDIAKQIPSTMKREYDMAVARDNFDWEKQFELAIDGETARKYYESTSTSDEEMCSMCGDFCAIKMVKDHEKANKN.

Substrate contacts are provided by residues Asn65, Met94, Tyr123, His162, 184-186 (SRG), 225-228 (DGLR), and Glu264. A Zn(2+)-binding site is contributed by His268. Tyr291 is a substrate binding site. Zn(2+) is bound at residue His332. Residues Cys408, Cys411, and Cys415 each coordinate [4Fe-4S] cluster.

It belongs to the ThiC family. Requires [4Fe-4S] cluster as cofactor.

The enzyme catalyses 5-amino-1-(5-phospho-beta-D-ribosyl)imidazole + S-adenosyl-L-methionine = 4-amino-2-methyl-5-(phosphooxymethyl)pyrimidine + CO + 5'-deoxyadenosine + formate + L-methionine + 3 H(+). Its pathway is cofactor biosynthesis; thiamine diphosphate biosynthesis. Its function is as follows. Catalyzes the synthesis of the hydroxymethylpyrimidine phosphate (HMP-P) moiety of thiamine from aminoimidazole ribotide (AIR) in a radical S-adenosyl-L-methionine (SAM)-dependent reaction. The sequence is that of Phosphomethylpyrimidine synthase 1 from Methanosphaera stadtmanae (strain ATCC 43021 / DSM 3091 / JCM 11832 / MCB-3).